Here is a 562-residue protein sequence, read N- to C-terminus: MLACLPGPGDLSFQLLSHTQMNTGLQKWDTTQKMRTAHYPTPAELDAYAKKVANNPLTIKIFPNSVKVPQRKHVRRTVNGLDTSAQRYSPYPTQAATKAGLLAIVKVPAKSILKDFDGTRARLLPEAIMNPPVAPYATVAPSTLAHPQAQALARQQALQHAQTLAHAPPQTLQHPQGIPPPQALSHPQSLQQPQGLGHPQPMAQTQGLVHPQALAHQGLQHPHNPLLHGGRKMPDSDAPPNVTVSTSTIPLSMAATLQHSQPPDLSSIVHQINQFCQTRAGISTTSVCEGQIANPSPISRSLLINASTRVSTHSVPTPMPSCVVNPMEHTHAATAALPAAGPVNLPTGISRVPTGYPSDLKPVTWNQHQLAHLQQMCSEASGTPAPGLTGKHAAGRELAGPGFVGKAPAYPQELCLAQSFHLKPPLEKPTPSPPVNGMAAPLAYPNGHYFQPLWNNILPTPNSDSSGSQDLAMPFHGGQPTGAPLDCAAAPGAHYRAGTGGGPVASQNSLMQTVDYLSGDFQQACFREQSLAMLSKAHRAPGNRAPDPTESRSLHIQHPGYR.

Low complexity-rich tracts occupy residues 155 to 167 (QQAL…LAHA) and 183 to 201 (ALSH…HPQP). Disordered stretches follow at residues 155–203 (QQAL…QPMA), 219–245 (LQHP…VTVS), and 537–562 (AHRA…PGYR).

It belongs to the FAM222 family.

This Homo sapiens (Human) protein is Protein FAM222B (FAM222B).